Reading from the N-terminus, the 302-residue chain is Aspartate carbamoyltransferase catalytic subunit (302 aa).

Carbamoyl phosphate contacts are provided by arginine 51 and threonine 52. Lysine 80 is an L-aspartate binding site. Positions 101, 129, and 132 each coordinate carbamoyl phosphate. Positions 162 and 224 each coordinate L-aspartate. Residues leucine 263 and proline 264 each contribute to the carbamoyl phosphate site.

The protein belongs to the aspartate/ornithine carbamoyltransferase superfamily. ATCase family. Heterododecamer (2C3:3R2) of six catalytic PyrB chains organized as two trimers (C3), and six regulatory PyrI chains organized as three dimers (R2).

The enzyme catalyses carbamoyl phosphate + L-aspartate = N-carbamoyl-L-aspartate + phosphate + H(+). It functions in the pathway pyrimidine metabolism; UMP biosynthesis via de novo pathway; (S)-dihydroorotate from bicarbonate: step 2/3. Its function is as follows. Catalyzes the condensation of carbamoyl phosphate and aspartate to form carbamoyl aspartate and inorganic phosphate, the committed step in the de novo pyrimidine nucleotide biosynthesis pathway. This chain is Aspartate carbamoyltransferase catalytic subunit, found in Azobacteroides pseudotrichonymphae genomovar. CFP2.